The sequence spans 258 residues: Proliferating cell nuclear antigen (258 aa).

The DNA-binding element occupies Asn-61–Lys-80.

This sequence belongs to the PCNA family. As to quaternary structure, homotrimer. Forms a complex with activator 1 heteropentamer in the presence of ATP.

The protein resides in the nucleus. This protein is an auxiliary protein of DNA polymerase delta and is involved in the control of eukaryotic DNA replication by increasing the polymerase's processibility during elongation of the leading strand. The chain is Proliferating cell nuclear antigen (pcna) from Dictyostelium discoideum (Social amoeba).